The sequence spans 220 residues: Charged multivesicular body protein 2a (220 aa).

Coiled-coil stretches lie at residues 12-53 (EEML…MAKQ) and 199-220 (PSAA…LRRD). The tract at residues 179 to 208 (LSNLPSTGGSLSVAGAKKGEPSAALADADA) is disordered. The short motif at 208-218 (ADLEERLNNLR) is the MIT-interacting motif element.

It belongs to the SNF7 family. As to quaternary structure, probable core component of the endosomal sorting required for transport complex III (ESCRT-III). ESCRT-III components are thought to multimerize to form a flat lattice on the perimeter membrane of the endosome.

It localises to the late endosome membrane. Its subcellular location is the cytoplasm. In terms of biological role, probable core component of the endosomal sorting required for transport complex III (ESCRT-III) which is involved in multivesicular bodies (MVBs) formation and sorting of endosomal cargo proteins into MVBs. MVBs contain intraluminal vesicles (ILVs) that are generated by invagination and scission from the limiting membrane of the endosome and mostly are delivered to lysosomes enabling degradation of membrane proteins, such as stimulated growth factor receptors, lysosomal enzymes and lipids. The protein is Charged multivesicular body protein 2a (chmp2a) of Xenopus tropicalis (Western clawed frog).